A 90-amino-acid chain; its full sequence is MMKTAVMFILVVVISLTYSSEEQEVARTYCGRHLANILAYVCFGVEKRGGAQYAPYWQETYLRSRKEPGVVDECCFRPCKLEVLKSYCGV.

The signal sequence occupies residues 1 to 20 (MMKTAVMFILVVVISLTYSS). Intrachain disulfides connect cysteine 30–cysteine 75, cysteine 42–cysteine 88, and cysteine 74–cysteine 79. Positions 49–64 (GGAQYAPYWQETYLRS) are cleaved as a propeptide — c peptide like.

It belongs to the insulin family. In terms of assembly, heterodimer of a B chain and an A chain linked by two disulfide bonds.

It localises to the secreted. In terms of biological role, brain peptide responsible for activation of prothoracic glands to produce ecdysone in insects. This Bombyx mori (Silk moth) protein is Bombyxin B-9 (BBXB9).